A 338-amino-acid polypeptide reads, in one-letter code: Fructose-bisphosphate aldolase (338 aa).

The substrate site is built by Arg50 and Lys138. Glu179 (proton acceptor) is an active-site residue. The active-site Schiff-base intermediate with dihydroxyacetone-P is the Lys221.

Belongs to the class I fructose-bisphosphate aldolase family.

It carries out the reaction beta-D-fructose 1,6-bisphosphate = D-glyceraldehyde 3-phosphate + dihydroxyacetone phosphate. Its pathway is carbohydrate degradation; glycolysis; D-glyceraldehyde 3-phosphate and glycerone phosphate from D-glucose: step 4/4. The sequence is that of Fructose-bisphosphate aldolase from Encephalitozoon cuniculi (strain GB-M1) (Microsporidian parasite).